Reading from the N-terminus, the 143-residue chain is Large ribosomal subunit protein uL11 (143 aa).

It belongs to the universal ribosomal protein uL11 family. Part of the ribosomal stalk of the 50S ribosomal subunit. Interacts with L10 and the large rRNA to form the base of the stalk. L10 forms an elongated spine to which L12 dimers bind in a sequential fashion forming a multimeric L10(L12)X complex. One or more lysine residues are methylated.

Its function is as follows. Forms part of the ribosomal stalk which helps the ribosome interact with GTP-bound translation factors. The chain is Large ribosomal subunit protein uL11 from Herminiimonas arsenicoxydans.